The following is a 993-amino-acid chain: Receptor-type tyrosine-protein kinase FLT3 (993 aa).

A signal peptide spans 1 to 26; that stretch reads MPALARDGGQLPLLVVFSAMIFGTIT. Residues 27-543 are Extracellular-facing; it reads NQDLPVIKCV…PFPFIQDNIS (517 aa). A disulfide bond links Cys35 and Cys65. Residues Asn43 and Asn100 are each glycosylated (N-linked (GlcNAc...) asparagine). The cysteines at positions 103 and 114 are disulfide-linked. Residue Asn151 is glycosylated (N-linked (GlcNAc...) asparagine). 3 disulfides stabilise this stretch: Cys199/Cys206, Cys232/Cys241, and Cys272/Cys330. Positions 253-343 constitute an Ig-like C2-type domain; that stretch reads PQTTLPQLFL…KHPSQSALVT (91 aa). N-linked (GlcNAc...) asparagine glycans are attached at residues Asn306, Asn323, Asn351, and Asn354. 2 disulfides stabilise this stretch: Cys368-Cys407 and Cys381-Cys392. N-linked (GlcNAc...) asparagine glycans are attached at residues Asn473, Asn502, and Asn541. Residues 544–563 form a helical membrane-spanning segment; it reads FYATIGVCLLFIVVLTLLIC. Residues 564–993 are Cytoplasmic-facing; sequence HKYKKQFRYE…LSPQAQVEDS (430 aa). Phosphotyrosine is present on Tyr572. A Phosphoserine modification is found at Ser574. Phosphotyrosine; by autocatalysis occurs at positions 589, 591, and 599. The interval 591 to 597 is important for normal regulation of the kinase activity and for maintaining the kinase in an inactive state in the absence of bound ligand; the sequence is YVDFREY. The Protein kinase domain maps to 610-943; that stretch reads LEFGKVLGSG…PSFPNLTSFL (334 aa). Residues 616–624 and Lys644 contribute to the ATP site; that span reads LGSGAFGKV. Position 726 is a phosphotyrosine; by autocatalysis (Tyr726). Residue Ser759 is modified to Phosphoserine. A phosphotyrosine mark is found at Tyr768 and Tyr793. Asp811 acts as the Proton acceptor in catalysis. Residues Tyr842, Tyr955, and Tyr969 each carry the phosphotyrosine; by autocatalysis modification. A Phosphoserine modification is found at Ser993.

This sequence belongs to the protein kinase superfamily. Tyr protein kinase family. CSF-1/PDGF receptor subfamily. Monomer in the absence of bound FLT3LG. Homodimer in the presence of bound FLT3LG. Interacts with FIZ1 following ligand activation. Interacts with FES, FER, LYN, FGR, HCK, SRC and GRB2. Interacts with PTPRJ/DEP-1 and PTPN11/SHP2. Interacts with RNF115 and RNF126. In terms of assembly, (Microbial infection) Interacts with human cytomegalovirus protein UL7. Post-translationally, N-glycosylated, contains complex N-glycans with sialic acid. Autophosphorylated on several tyrosine residues in response to FLT3LG binding. FLT3LG binding also increases phosphorylation of mutant kinases that are constitutively activated. Dephosphorylated by PTPRJ/DEP-1, PTPN1, PTPN6/SHP-1, and to a lesser degree by PTPN12. Dephosphorylation is important for export from the endoplasmic reticulum and location at the cell membrane. In terms of processing, rapidly ubiquitinated by UBE2L6 and the E3 ubiquitin-protein ligase SIAH1 after autophosphorylation, leading to its proteasomal degradation. Detected in bone marrow, in hematopoietic stem cells, in myeloid progenitor cells and in granulocyte/macrophage progenitor cells (at protein level). Detected in bone marrow, liver, thymus, spleen and lymph node, and at low levels in kidney and pancreas. Highly expressed in T-cell leukemia.

It localises to the membrane. The protein localises to the endoplasmic reticulum lumen. The catalysed reaction is L-tyrosyl-[protein] + ATP = O-phospho-L-tyrosyl-[protein] + ADP + H(+). Its activity is regulated as follows. Present in an inactive conformation in the absence of bound ligand. FLT3LG binding leads to dimerization and activation by autophosphorylation. In terms of biological role, tyrosine-protein kinase that acts as a cell-surface receptor for the cytokine FLT3LG and regulates differentiation, proliferation and survival of hematopoietic progenitor cells and of dendritic cells. Promotes phosphorylation of SHC1 and AKT1, and activation of the downstream effector MTOR. Promotes activation of RAS signaling and phosphorylation of downstream kinases, including MAPK1/ERK2 and/or MAPK3/ERK1. Promotes phosphorylation of FES, FER, PTPN6/SHP, PTPN11/SHP-2, PLCG1, and STAT5A and/or STAT5B. Activation of wild-type FLT3 causes only marginal activation of STAT5A or STAT5B. Mutations that cause constitutive kinase activity promote cell proliferation and resistance to apoptosis via the activation of multiple signaling pathways. The protein is Receptor-type tyrosine-protein kinase FLT3 (FLT3) of Homo sapiens (Human).